Reading from the N-terminus, the 63-residue chain is Toxin Cn11 (63 aa).

The region spanning 2–63 (RDGYPVDEKG…KVWTYETNTC (62 aa)) is the LCN-type CS-alpha/beta domain. Disulfide bonds link C12–C63, C16–C37, C23–C44, and C27–C46.

The protein belongs to the long (4 C-C) scorpion toxin superfamily. Sodium channel inhibitor family. As to expression, expressed by the venom gland.

The protein resides in the secreted. In terms of biological role, first blocker of sodium channels (Nav) found in scorpions. Is lethal to crustaceans (Cambarellus montezumae), less toxic to insects (crickets) and non-toxic to mammals (mice) at the doses assayed. This Centruroides noxius (Mexican scorpion) protein is Toxin Cn11.